The following is a 97-amino-acid chain: Large ribosomal subunit protein uL23 (97 aa).

This sequence belongs to the universal ribosomal protein uL23 family. Part of the 50S ribosomal subunit. Contacts protein L29, and trigger factor when it is bound to the ribosome.

Its function is as follows. One of the early assembly proteins it binds 23S rRNA. One of the proteins that surrounds the polypeptide exit tunnel on the outside of the ribosome. Forms the main docking site for trigger factor binding to the ribosome. This chain is Large ribosomal subunit protein uL23, found in Limosilactobacillus fermentum (strain NBRC 3956 / LMG 18251) (Lactobacillus fermentum).